Consider the following 181-residue polypeptide: Caltractin ICL1d (181 aa).

The segment at 1-29 is disordered; that stretch reads MARRGQQPPPQQAPPAQKNQTGKFNPAEF. EF-hand domains follow at residues 37 to 72, 73 to 108, 110 to 145, and 146 to 181; these read EEVL…LGFE, AKNQ…RISE, DSKA…LGET, and MDDS…KTFA. Residues Asp-50, Asp-52, Thr-54, Ser-56, Glu-61, Asp-86, Asp-88, Ser-90, Gln-92, and Glu-97 each contribute to the Ca(2+) site.

The protein belongs to the centrin family. Monomer.

It localises to the cytoplasm. Its subcellular location is the cytoskeleton. Plays a fundamental role in microtubule organizing center structure and function. Component of the infraciliary lattice (ICL) and the ciliary basal bodies. In Paramecium tetraurelia, this protein is Caltractin ICL1d (Icl1d).